The sequence spans 193 residues: Ribosomal RNA small subunit methyltransferase G (193 aa).

S-adenosyl-L-methionine contacts are provided by residues glycine 64, leucine 69, 113–114 (IE), and arginine 126.

It belongs to the methyltransferase superfamily. RNA methyltransferase RsmG family.

It localises to the cytoplasm. It carries out the reaction guanosine(527) in 16S rRNA + S-adenosyl-L-methionine = N(7)-methylguanosine(527) in 16S rRNA + S-adenosyl-L-homocysteine. In terms of biological role, specifically methylates the N7 position of guanine in position 527 of 16S rRNA. In Rickettsia massiliae (strain Mtu5), this protein is Ribosomal RNA small subunit methyltransferase G.